Reading from the N-terminus, the 184-residue chain is Uroplakin-2 (184 aa).

An N-terminal signal peptide occupies residues 1–25 (MASPLPVRTLPLILILLAVLAPGAS). Residues 26–84 (DFNISSLSGPLSPALTESLLVALPPCHLTGGNATLMVRRANDSKVVKSSFMVPPCRGRR) constitute a propeptide that is removed on maturation. N-linked (GlcNAc...) asparagine glycans are attached at residues N28, N57, and N66. Residues 85–155 (ELVSVVDSGS…IGLGMARTGG (71 aa)) lie on the Lumenal side of the membrane. Residues 156-180 (MVVITVLLSVAMFLLVVGFITALAL) traverse the membrane as a helical segment. At 181–184 (GARK) the chain is on the cytoplasmic side.

It belongs to the uroplakin-2 family. In terms of assembly, interacts with uroplakin-1a (UPK1A). Expressed only in the urothelium. Localizes to urothelial superficial cells.

The protein localises to the cell membrane. Functionally, component of the asymmetric unit membrane (AUM); a highly specialized biomembrane elaborated by terminally differentiated urothelial cells. May play an important role in regulating the assembly of the AUM. The chain is Uroplakin-2 (UPK2) from Sus scrofa (Pig).